The sequence spans 243 residues: tRNA (guanine-N(1)-)-methyltransferase (243 aa).

Residues Gly-112 and 131–136 (LGDYVL) contribute to the S-adenosyl-L-methionine site.

This sequence belongs to the RNA methyltransferase TrmD family. As to quaternary structure, homodimer.

The protein resides in the cytoplasm. It catalyses the reaction guanosine(37) in tRNA + S-adenosyl-L-methionine = N(1)-methylguanosine(37) in tRNA + S-adenosyl-L-homocysteine + H(+). Specifically methylates guanosine-37 in various tRNAs. This chain is tRNA (guanine-N(1)-)-methyltransferase, found in Leuconostoc mesenteroides subsp. mesenteroides (strain ATCC 8293 / DSM 20343 / BCRC 11652 / CCM 1803 / JCM 6124 / NCDO 523 / NBRC 100496 / NCIMB 8023 / NCTC 12954 / NRRL B-1118 / 37Y).